A 225-amino-acid polypeptide reads, in one-letter code: DnaA regulatory inactivator Hda (225 aa).

The protein belongs to the DnaA family. HdA subfamily. As to quaternary structure, the active form seems to be an ADP-bound monomer. Forms the RIDA complex (regulatory inactivation of DnaA) of ATP-DnaA, ADP-Hda and the DNA-loaded beta sliding clamp (dnaN).

Mediates the interaction of DNA replication initiator protein DnaA with DNA polymerase subunit beta sliding clamp (dnaN). Stimulates hydrolysis of ATP-DnaA to ADP-DnaA, rendering DnaA inactive for reinitiation, a process called regulatory inhibition of DnaA or RIDA. This chain is DnaA regulatory inactivator Hda, found in Klebsiella pneumoniae (strain 342).